Reading from the N-terminus, the 319-residue chain is Cobalamin biosynthesis protein CobD (319 aa).

The next 4 membrane-spanning stretches (helical) occupy residues 55-75 (AVMW…VLAL), 78-98 (EIHP…VLAG), 153-173 (VDGI…LAMA), and 296-316 (LMWV…CLLV).

The protein belongs to the CobD/CbiB family.

The protein localises to the cell membrane. It participates in cofactor biosynthesis; adenosylcobalamin biosynthesis. In terms of biological role, converts cobyric acid to cobinamide by the addition of aminopropanol on the F carboxylic group. The polypeptide is Cobalamin biosynthesis protein CobD (Citrobacter koseri (strain ATCC BAA-895 / CDC 4225-83 / SGSC4696)).